The sequence spans 282 residues: Bis(5'-nucleosyl)-tetraphosphatase, symmetrical (282 aa).

Belongs to the Ap4A hydrolase family.

The enzyme catalyses P(1),P(4)-bis(5'-adenosyl) tetraphosphate + H2O = 2 ADP + 2 H(+). Its function is as follows. Hydrolyzes diadenosine 5',5'''-P1,P4-tetraphosphate to yield ADP. This is Bis(5'-nucleosyl)-tetraphosphatase, symmetrical from Klebsiella pneumoniae (strain 342).